A 1241-amino-acid chain; its full sequence is eIF-2-alpha kinase GCN2 (1241 aa).

Residues 1-15 are compositionally biased toward basic residues; that stretch reads MGRSSSKKKKKRGGS. A disordered region spans residues 1–33; sequence MGRSSSKKKKKRGGSGRRGQLKDHGSNADEDNE. Residues 37–148 enclose the RWD domain; it reads EEITALSAIF…EAAQEFLSEI (112 aa). The disordered stretch occupies residues 253–321; the sequence is PIAKLNTVQE…SLGSWSSDSL (69 aa). Composition is skewed to low complexity over residues 267-276 and 307-321; these read DTSISSFDSS and NSES…SDSL. The 307-residue stretch at 425–731 folds into the Protein kinase domain; it reads FEELKPLGQG…ATELLKHAFP (307 aa). ATP contacts are provided by residues 431–439 and K454; that span reads LGQGGFGHV. D586 functions as the Proton acceptor in the catalytic mechanism. The histidyl-tRNA synthetase-like stretch occupies residues 819–1219; it reads IPMRLLSDCP…ELKKEKVVGR (401 aa).

This sequence belongs to the protein kinase superfamily. Ser/Thr protein kinase family. GCN2 subfamily. As to quaternary structure, homodimer; homodimerization is important for kinase activation by uncharged tRNAs. In terms of tissue distribution, expressed in roots, leaves, stems, buds, flowers, siliques and seedlings.

It is found in the cytoplasm. It carries out the reaction L-seryl-[protein] + ATP = O-phospho-L-seryl-[protein] + ADP + H(+). The catalysed reaction is L-threonyl-[protein] + ATP = O-phospho-L-threonyl-[protein] + ADP + H(+). The kinase activity is stimulated upon binding to uncharged tRNAs. In terms of biological role, metabolic-stress sensing protein kinase that phosphorylates the alpha subunit of eukaryotic translation initiation factor 2 eIF-2-alpha in response to low amino acid availability. Plays a role as an activator of the general amino acid control pathway required for adapatation to amino acid starvation. Converts phosphorylated eIF-2-alpha either to a competitive inhibitor of translation initiation, leading to a global protein synthesis repression, and thus to a reduced overall utilization of amino acids, or to a translational initiation activation of specific mRNAs, and hence allowing reprogramming of amino acid biosynthetic gene expression to alleviate nutrient depletion. Binds uncharged tRNAs. In Arabidopsis thaliana (Mouse-ear cress), this protein is eIF-2-alpha kinase GCN2.